A 410-amino-acid polypeptide reads, in one-letter code: 2-oxoglutarate-dependent dioxygenase AOP3 (410 aa).

Positions 258 to 355 (GNASVGAKEA…RYAAALFSNP (98 aa)) constitute a Fe2OG dioxygenase domain. Residues histidine 278, aspartate 280, and histidine 335 each contribute to the Fe cation site. Arginine 346 is a 2-oxoglutarate binding site.

The protein belongs to the iron/ascorbate-dependent oxidoreductase family. It depends on Fe(2+) as a cofactor.

Functionally, 2-oxoglutarate-dependent dioxygenase involved in glucosinolates biosynthesis. Catalyzes the conversion of methylsulfinylalkyl glucosinolates to hydroxyalkyl glucosinolates. The protein is 2-oxoglutarate-dependent dioxygenase AOP3 (AOP3) of Arabidopsis thaliana (Mouse-ear cress).